Here is a 211-residue protein sequence, read N- to C-terminus: Octanoyltransferase (211 aa).

Residues P32–I207 enclose the BPL/LPL catalytic domain. Substrate is bound by residues R71–H78, S138–G140, and G151–A153. Catalysis depends on C169, which acts as the Acyl-thioester intermediate.

The protein belongs to the LipB family.

It localises to the cytoplasm. The catalysed reaction is octanoyl-[ACP] + L-lysyl-[protein] = N(6)-octanoyl-L-lysyl-[protein] + holo-[ACP] + H(+). The protein operates within protein modification; protein lipoylation via endogenous pathway; protein N(6)-(lipoyl)lysine from octanoyl-[acyl-carrier-protein]: step 1/2. In terms of biological role, catalyzes the transfer of endogenously produced octanoic acid from octanoyl-acyl-carrier-protein onto the lipoyl domains of lipoate-dependent enzymes. Lipoyl-ACP can also act as a substrate although octanoyl-ACP is likely to be the physiological substrate. The protein is Octanoyltransferase of Buchnera aphidicola subsp. Acyrthosiphon pisum (strain APS) (Acyrthosiphon pisum symbiotic bacterium).